A 140-amino-acid polypeptide reads, in one-letter code: Translation initiation factor 2 subunit beta (140 aa).

Belongs to the eIF-2-beta/eIF-5 family. In terms of assembly, heterotrimer composed of an alpha, a beta and a gamma chain.

Its function is as follows. eIF-2 functions in the early steps of protein synthesis by forming a ternary complex with GTP and initiator tRNA. In Pyrococcus furiosus (strain ATCC 43587 / DSM 3638 / JCM 8422 / Vc1), this protein is Translation initiation factor 2 subunit beta.